The chain runs to 87 residues: U3-theraphotoxin-Hhn1j (87 aa).

The first 24 residues, 1 to 24 (MVNMKASMFLTFAGLVLLFVVCYA), serve as a signal peptide directing secretion. Positions 25-52 (SESEEKEFPKEMLSSIFAVDNDFKQEER) are excised as a propeptide. Intrachain disulfides connect Cys-54-Cys-67, Cys-61-Cys-72, and Cys-66-Cys-79.

This sequence belongs to the neurotoxin 10 (Hwtx-1) family. 51 (Hntx-8) subfamily. Hntx-8 sub-subfamily. As to expression, expressed by the venom gland.

It is found in the secreted. In terms of biological role, ion channel inhibitor. The protein is U3-theraphotoxin-Hhn1j of Cyriopagopus hainanus (Chinese bird spider).